The chain runs to 363 residues: Peroxisomal (S)-2-hydroxyacid oxidase GLO4 (363 aa).

Residues 1–357 (MDQIVNVDEF…TRNHVRTENE (357 aa)) form the FMN hydroxy acid dehydrogenase domain. FMN contacts are provided by residues 78-80 (PTA), Ser107, 128-130 (QIY), and Thr156. Tyr130 lines the a 2-oxocarboxylate pocket. Arg165 is an a 2-oxocarboxylate binding site. 2 residues coordinate FMN: Lys228 and Ser250. His252 (proton acceptor) is an active-site residue. Arg255 contributes to the a 2-oxocarboxylate binding site. Residues 283–287 (DGGVR) and 306–307 (GR) contribute to the FMN site. Residues 361-363 (SML) carry the Microbody targeting signal motif.

It belongs to the FMN-dependent alpha-hydroxy acid dehydrogenase family. In terms of assembly, homotetramer. FMN is required as a cofactor.

It localises to the peroxisome. It catalyses the reaction a (2S)-2-hydroxycarboxylate + O2 = a 2-oxocarboxylate + H2O2. The enzyme catalyses 2-hydroxydodecanoate + O2 = 2-oxododecanoate + H2O2. It carries out the reaction 2-hydroxyhexanoate + O2 = 2-oxohexanoate + H2O2. The catalysed reaction is 2-hydroxyoctanoate + O2 = 2-oxooctanoate + H2O2. It catalyses the reaction (S)-lactate + O2 = pyruvate + H2O2. It participates in lipid metabolism; fatty acid metabolism. In terms of biological role, oxidase that catalyzes the oxidation of a broad range of 2-hydroxyacids to the corresponding 2-oxoacids, with a reduction of O2 to H2O2. Displays the highest activity with the long-chain fatty acid 2-hydroxydodecanoate and has intermediate activity with 2-hydroxyhexanoate, 2-hydroxyoctanote, and the short-chain hydroxyacid (S)-lactate (L-lactate). With much lower activity, it can also use glycolate, leucic acid, valic acid, and isoleucic acid as substrates in vitro. Cannot use 2-hydroxyhexadecanoate or D-lactate as substrates. May be involved in a general medium- and long-chain fatty acid catabolic pathway such as alpha-oxidation. In Arabidopsis thaliana (Mouse-ear cress), this protein is Peroxisomal (S)-2-hydroxyacid oxidase GLO4 (GLO4).